A 185-amino-acid chain; its full sequence is Histone H1-delta (185 aa).

Disordered regions lie at residues 1-37 and 90-185; these read MADT…PKYS and RHVK…GKKK. The H15 domain occupies 32-105; the sequence is SHPKYSDMIA…GASGSFLLAE (74 aa). Positions 109–185 are enriched in basic residues; that stretch reads TPKKAAAKKA…KAAKGKGKKK (77 aa).

The protein belongs to the histone H1/H5 family.

It localises to the nucleus. Its subcellular location is the chromosome. Its function is as follows. Histones H1 are necessary for the condensation of nucleosome chains into higher-order structures. This Strongylocentrotus purpuratus (Purple sea urchin) protein is Histone H1-delta.